The chain runs to 213 residues: Peptidoglycan-N-acetylglucosamine deacetylase BC_3618 (213 aa).

The 182-residue stretch at 22 to 203 folds into the NodB homology domain; that stretch reads KIIAITFDDG…ELKKQGYRFV (182 aa). The active-site Proton acceptor is the Asp29. Residues Asp30, His80, and His84 each contribute to the Zn(2+) site. Residue His175 is the Proton donor of the active site.

The protein belongs to the polysaccharide deacetylase family. The cofactor is Zn(2+).

It carries out the reaction peptidoglycan-N-acetyl-D-glucosamine + H2O = peptidoglycan-D-glucosamine + acetate.. Its activity is regulated as follows. Inhibited by CuCl(2) and ZnCl(2). In terms of biological role, catalyzes the deacetylation of N-acetylglucosamine (GlcNAc) residues in peptidoglycan. Also acts on soluble chitin substrates and N-acetylchitooligomers. Acts on cell wall peptidoglycan from the Gram-positive bacteria B.cereus and B.subtilis and the Gram-negative bacterium H.pylori. Not active on acetylated xylan. In Bacillus cereus (strain ATCC 14579 / DSM 31 / CCUG 7414 / JCM 2152 / NBRC 15305 / NCIMB 9373 / NCTC 2599 / NRRL B-3711), this protein is Peptidoglycan-N-acetylglucosamine deacetylase BC_3618.